The primary structure comprises 733 residues: Phosphoribosylformylglycinamidine synthase subunit PurL (733 aa).

Residue histidine 41 is part of the active site. ATP contacts are provided by tyrosine 44 and lysine 83. Glutamate 85 is a Mg(2+) binding site. Substrate is bound by residues 86–89 (SHNH) and arginine 108. The active-site Proton acceptor is the histidine 87. Aspartate 109 contributes to the Mg(2+) binding site. Positions 212–232 (GASFASQELSEESEEKRPSVQ) are disordered. Position 232 (glutamine 232) interacts with substrate. Residue aspartate 260 coordinates Mg(2+). 304 to 306 (ESQ) is a binding site for substrate. The ATP site is built by aspartate 488 and glycine 525. Position 526 (asparagine 526) interacts with Mg(2+). Serine 528 provides a ligand contact to substrate.

It belongs to the FGAMS family. Monomer. Part of the FGAM synthase complex composed of 1 PurL, 1 PurQ and 2 PurS subunits.

The protein resides in the cytoplasm. The catalysed reaction is N(2)-formyl-N(1)-(5-phospho-beta-D-ribosyl)glycinamide + L-glutamine + ATP + H2O = 2-formamido-N(1)-(5-O-phospho-beta-D-ribosyl)acetamidine + L-glutamate + ADP + phosphate + H(+). The protein operates within purine metabolism; IMP biosynthesis via de novo pathway; 5-amino-1-(5-phospho-D-ribosyl)imidazole from N(2)-formyl-N(1)-(5-phospho-D-ribosyl)glycinamide: step 1/2. Functionally, part of the phosphoribosylformylglycinamidine synthase complex involved in the purines biosynthetic pathway. Catalyzes the ATP-dependent conversion of formylglycinamide ribonucleotide (FGAR) and glutamine to yield formylglycinamidine ribonucleotide (FGAM) and glutamate. The FGAM synthase complex is composed of three subunits. PurQ produces an ammonia molecule by converting glutamine to glutamate. PurL transfers the ammonia molecule to FGAR to form FGAM in an ATP-dependent manner. PurS interacts with PurQ and PurL and is thought to assist in the transfer of the ammonia molecule from PurQ to PurL. This is Phosphoribosylformylglycinamidine synthase subunit PurL from Thermoanaerobacter sp. (strain X514).